The sequence spans 732 residues: Acylamino-acid-releasing enzyme (732 aa).

Met-1 is subject to N-acetylmethionine. A phosphoserine mark is found at Ser-185 and Ser-187. Catalysis depends on charge relay system residues Ser-587, Asp-675, and His-707.

This sequence belongs to the peptidase S9C family. In terms of assembly, homotetramer.

The protein localises to the cytoplasm. It carries out the reaction Cleavage of an N-acetyl or N-formyl amino acid from the N-terminus of a polypeptide.. With respect to regulation, homotetramerization is required for activity. Tetramerization results in the formation of a gated channel which is involved in substrate selection and substrate access to the catalytic sites. In terms of biological role, this enzyme catalyzes the hydrolysis of the N-terminal peptide bond of an N-acetylated peptide to generate an N-acetylated amino acid and a peptide with a free N-terminus. It preferentially cleaves off Ac-Ala, Ac-Met and Ac-Ser. Also, involved in the degradation of oxidized and glycated proteins. The polypeptide is Acylamino-acid-releasing enzyme (Apeh) (Mus musculus (Mouse)).